Here is a 784-residue protein sequence, read N- to C-terminus: Ent-kaurene synthase 1, chloroplastic (784 aa).

The transit peptide at 1-28 (MNLSLCIASPLLTKSSRPTALSAIHTAS) directs the protein to the chloroplast. Mg(2+) contacts are provided by Asp528, Asp532, Asn672, and Glu680. A DDXXD motif motif is present at residues 528–532 (DDFFD).

Belongs to the terpene synthase family. It depends on Mg(2+) as a cofactor. In terms of tissue distribution, accumulates in leaves.

It localises to the plastid. It is found in the chloroplast. It catalyses the reaction ent-copalyl diphosphate = ent-kaur-16-ene + diphosphate. The protein operates within secondary metabolite biosynthesis; terpenoid biosynthesis. It participates in plant hormone biosynthesis; gibberellin biosynthesis. Its function is as follows. Involved in the biosynthesis of ent-kaurene diterpenoids natural products such as oridonin, miltiradiene, eriocalyxin B and nezukol, known to exhibit antitumor, anti-inflammatory and antibacterial activities, and in the production of gibberellins phytohormones. Catalyzes the conversion of ent-copalyl diphosphate (ent-CPP) to ent-kaurene. This Stevia rebaudiana (Stevia) protein is Ent-kaurene synthase 1, chloroplastic.